Consider the following 644-residue polypeptide: 1-deoxy-D-xylulose-5-phosphate synthase (644 aa).

Thiamine diphosphate is bound by residues His78 and Gly120–Ala122. Asp149 serves as a coordination point for Mg(2+). Residues Ala150–Ala151, Asn178, and Glu373 each bind thiamine diphosphate. A Mg(2+)-binding site is contributed by Asn178.

This sequence belongs to the transketolase family. DXPS subfamily. Homodimer. Requires Mg(2+) as cofactor. It depends on thiamine diphosphate as a cofactor.

The enzyme catalyses D-glyceraldehyde 3-phosphate + pyruvate + H(+) = 1-deoxy-D-xylulose 5-phosphate + CO2. The protein operates within metabolic intermediate biosynthesis; 1-deoxy-D-xylulose 5-phosphate biosynthesis; 1-deoxy-D-xylulose 5-phosphate from D-glyceraldehyde 3-phosphate and pyruvate: step 1/1. Catalyzes the acyloin condensation reaction between C atoms 2 and 3 of pyruvate and glyceraldehyde 3-phosphate to yield 1-deoxy-D-xylulose-5-phosphate (DXP). The protein is 1-deoxy-D-xylulose-5-phosphate synthase of Chlamydia abortus (strain DSM 27085 / S26/3) (Chlamydophila abortus).